A 144-amino-acid chain; its full sequence is Tryparedoxin (144 aa).

The region spanning 2–144 (SGLAKYLPGA…PDGANFPWPN (143 aa)) is the Thioredoxin domain. Cysteines 40 and 43 form a disulfide.

Belongs to the thioredoxin family.

Acts as a thiol-disulfide oxidoreductase. It is spontaneously reduced by trypanothione. The polypeptide is Tryparedoxin (Trypanosoma brucei brucei).